The chain runs to 522 residues: Lysine--tRNA ligase (522 aa).

The 'HIGH' region motif lies at 44-52 (PSGLPHIGT). The 'KMSKS' region signature appears at 290 to 294 (KISKS). Position 293 (K293) interacts with ATP.

This sequence belongs to the class-I aminoacyl-tRNA synthetase family.

It is found in the cytoplasm. The catalysed reaction is tRNA(Lys) + L-lysine + ATP = L-lysyl-tRNA(Lys) + AMP + diphosphate. The protein is Lysine--tRNA ligase of Rickettsia africae (strain ESF-5).